A 320-amino-acid polypeptide reads, in one-letter code: MRQTKTGILLANLGTPDAPTPEAVKRYLKQFLSDRRVVDTSRLLWWPLLRGVILPLRSPRVAKLYASVWMEGGSPLMVYSRQQQQALAQRLPETPVALGMSYGSPSLESAVDELLAEHVDHIVVLPLYPQFSCSTVGAVWDELARILARKRSIPGISFIRDYADNHDYINALANSVRASFAKHGEPDLLLLSYHGIPQRYADEGDDYPQRCRTTTRELASALGMAPEKVMMTFQSRFGREPWLMPYTDETLKMLGEKGVGHIQVMCPGFAADCLETLEEIAEQNREVFLGAGGKKYEYIPALNATPEHIEMMANLVAAYR.

H194 and E275 together coordinate Fe cation.

The protein belongs to the ferrochelatase family. In terms of assembly, monomer.

Its subcellular location is the cytoplasm. It catalyses the reaction heme b + 2 H(+) = protoporphyrin IX + Fe(2+). The protein operates within porphyrin-containing compound metabolism; protoheme biosynthesis; protoheme from protoporphyrin-IX: step 1/1. Catalyzes the ferrous insertion into protoporphyrin IX. This Escherichia coli O157:H7 (strain EC4115 / EHEC) protein is Ferrochelatase.